A 387-amino-acid polypeptide reads, in one-letter code: Double C2-like domain-containing protein gamma (387 aa).

2 consecutive C2 domains span residues 83–209 and 243–376; these read ALGT…DICL and ERGR…ELWH. Ca(2+) contacts are provided by D274, D280, D334, D336, and D342.

Ca(2+) is required as a cofactor.

Its function is as follows. May be involved in regulation of vesicular trafficking. In vitro, does not bind calcium and phospholipids. The polypeptide is Double C2-like domain-containing protein gamma (Doc2g) (Mus musculus (Mouse)).